A 298-amino-acid polypeptide reads, in one-letter code: MTTSSLAWQQATARVQQFYRLTKPRVVSLIVFTAVIGMFLSVPGAVPLDKLIFGTVGISLVAGAAAALNCLVEYKFDAIMARTKGRPLPQGKVSVPETLFFLVLIGGFGLFMLHQWVNPLTMWLTLGTFVGYAIIYTVILKPLTPQNIVIGGASGAMPPVLGWAAVTGEISADALLLFLIIFAWTPPHFWALALYRKTDYAKIGMPMLPVTHGDEFTRLHVLLYTIILCVVTVLPYLTQMSGLIYLGSVLILDAIFFYYAIRIYLHYTDQIAREAFRYSIAYLALLFTALLVDHYFYF.

A run of 9 helical transmembrane segments spans residues 26–46 (VVSL…PGAV), 52–72 (IFGT…NCLV), 93–113 (VSVP…LFML), 120–140 (LTMW…TVIL), 148–168 (IVIG…AVTG), 174–194 (ALLL…ALAL), 219–239 (LHVL…YLTQ), 241–261 (SGLI…YYAI), and 278–298 (YSIA…YFYF).

The protein belongs to the UbiA prenyltransferase family. Protoheme IX farnesyltransferase subfamily.

It localises to the cell inner membrane. The enzyme catalyses heme b + (2E,6E)-farnesyl diphosphate + H2O = Fe(II)-heme o + diphosphate. It functions in the pathway porphyrin-containing compound metabolism; heme O biosynthesis; heme O from protoheme: step 1/1. Functionally, converts heme B (protoheme IX) to heme O by substitution of the vinyl group on carbon 2 of heme B porphyrin ring with a hydroxyethyl farnesyl side group. This is Protoheme IX farnesyltransferase from Nitrosomonas europaea (strain ATCC 19718 / CIP 103999 / KCTC 2705 / NBRC 14298).